Reading from the N-terminus, the 158-residue chain is Deoxyuridine 5'-triphosphate nucleotidohydrolase (158 aa).

Substrate contacts are provided by residues 75-77 (RSG), Asn-88, 92-94 (TVD), and Lys-102.

Belongs to the dUTPase family. Mg(2+) is required as a cofactor.

The enzyme catalyses dUTP + H2O = dUMP + diphosphate + H(+). The protein operates within pyrimidine metabolism; dUMP biosynthesis; dUMP from dCTP (dUTP route): step 2/2. This enzyme is involved in nucleotide metabolism: it produces dUMP, the immediate precursor of thymidine nucleotides and it decreases the intracellular concentration of dUTP so that uracil cannot be incorporated into DNA. This is Deoxyuridine 5'-triphosphate nucleotidohydrolase from Bifidobacterium longum (strain DJO10A).